The sequence spans 109 residues: U4-lycotoxin-Ls1a (109 aa).

The N-terminal stretch at 1 to 22 (MKVLVLFSVLFLTLFSYSSTEA) is a signal peptide. The propeptide occupies 23–44 (IDEFDSDAEEDMLSLMANEQVR). A knottin domain region spans residues 45–88 (AKACTPRLHDCSHDRHSCCRGELFKDVCYCFYPEGEDKTEVCSC). 4 disulfide bridges follow: Cys-48/Cys-63, Cys-55/Cys-72, Cys-62/Cys-88, and Cys-74/Cys-86. The tract at residues 89–108 (QQPKSHKYIEKVVDKAKTVV) is linear cationic cytotoxin domain.

Belongs to the neurotoxin 19 (CSTX) family. 05 (U4-Lctx) subfamily. Expressed by the venom gland.

Its subcellular location is the secreted. In terms of biological role, enhances the high-affinity desensitization of human P2RX3 purinoceptors. This is U4-lycotoxin-Ls1a from Lycosa singoriensis (Wolf spider).